Here is a 123-residue protein sequence, read N- to C-terminus: Large ribosomal subunit protein uL29y (123 aa).

Belongs to the universal ribosomal protein uL29 family.

The sequence is that of Large ribosomal subunit protein uL29y (RPL35B) from Arabidopsis thaliana (Mouse-ear cress).